Reading from the N-terminus, the 306-residue chain is Small ribosomal subunit protein uS2 (306 aa).

The segment at 257-306 (EGDKKDETAAAAEVQTSAETEKVADAEKPAEAVAEAEAEAPAADADAEQA) is disordered. The span at 275–286 (ETEKVADAEKPA) shows a compositional bias: basic and acidic residues. Over residues 287-300 (EAVAEAEAEAPAAD) the composition is skewed to low complexity.

The protein belongs to the universal ribosomal protein uS2 family.

The polypeptide is Small ribosomal subunit protein uS2 (Streptomyces griseus subsp. griseus (strain JCM 4626 / CBS 651.72 / NBRC 13350 / KCC S-0626 / ISP 5235)).